Consider the following 419-residue polypeptide: 26S proteasome regulatory subunit 8 homolog A (419 aa).

An N-acetylalanine modification is found at Ala2. 202 to 209 serves as a coordination point for ATP; sequence GPPGTGKT. Residue Lys406 forms a Glycyl lysine isopeptide (Lys-Gly) (interchain with G-Cter in ubiquitin) linkage.

It belongs to the AAA ATPase family. In terms of assembly, component of the 19S regulatory particle (RP/PA700) base subcomplex of the 26S proteasome. The 26S proteasome is composed of a core protease (CP), known as the 20S proteasome, capped at one or both ends by the 19S regulatory particle (RP/PA700). The RP/PA700 complex is composed of at least 17 different subunits in two subcomplexes, the base and the lid, which form the portions proximal and distal to the 20S proteolytic core, respectively.

It is found in the cytoplasm. Its subcellular location is the nucleus. Its function is as follows. The 26S proteasome is involved in the ATP-dependent degradation of ubiquitinated proteins. The regulatory (or ATPase) complex confers ATP dependency and substrate specificity to the 26S complex. The polypeptide is 26S proteasome regulatory subunit 8 homolog A (RPT6A) (Arabidopsis thaliana (Mouse-ear cress)).